Here is a 169-residue protein sequence, read N- to C-terminus: Cell division inhibitor SulA (169 aa).

The segment at 106–112 (ALRTGNY) is ftsZ binding. The interval 162 to 169 (KIHSNLYH) is lon protease binding.

The protein belongs to the SulA family. In terms of assembly, interacts with FtsZ. In terms of processing, is rapidly cleaved and degraded by the Lon protease once DNA damage is repaired.

Component of the SOS system and an inhibitor of cell division. Accumulation of SulA causes rapid cessation of cell division and the appearance of long, non-septate filaments. In the presence of GTP, binds a polymerization-competent form of FtsZ in a 1:1 ratio, thus inhibiting FtsZ polymerization and therefore preventing it from participating in the assembly of the Z ring. This mechanism prevents the premature segregation of damaged DNA to daughter cells during cell division. The protein is Cell division inhibitor SulA of Salmonella agona (strain SL483).